The primary structure comprises 458 residues: PH domain-containing protein DDB_G0274775 (458 aa).

One can recognise a PH domain in the interval 15–112 (PSDREGWLTK…WMESIKRNLD (98 aa)). The tract at residues 111–154 (LDGEGGMKSGGNDIVSSPKINSEPTPKVNQNGSAPEKSSLSSPR) is disordered. The segment covering 124 to 142 (IVSSPKINSEPTPKVNQNG) has biased composition (polar residues). Residues 143 to 154 (SAPEKSSLSSPR) are compositionally biased toward low complexity.

In Dictyostelium discoideum (Social amoeba), this protein is PH domain-containing protein DDB_G0274775.